We begin with the raw amino-acid sequence, 398 residues long: Succinate--CoA ligase [ADP-forming] subunit beta (398 aa).

Residues 9 to 254 (KALLHEFGVP…ETEEDAKEIE (246 aa)) form the ATP-grasp domain. ATP is bound by residues Lys-46, 53–55 (GRG), Glu-109, Ser-112, and Glu-117. Residues Asn-209 and Asp-223 each contribute to the Mg(2+) site. Residues Asn-274 and 331–333 (GIM) contribute to the substrate site.

The protein belongs to the succinate/malate CoA ligase beta subunit family. As to quaternary structure, heterotetramer of two alpha and two beta subunits. It depends on Mg(2+) as a cofactor.

It carries out the reaction succinate + ATP + CoA = succinyl-CoA + ADP + phosphate. The catalysed reaction is GTP + succinate + CoA = succinyl-CoA + GDP + phosphate. It participates in carbohydrate metabolism; tricarboxylic acid cycle; succinate from succinyl-CoA (ligase route): step 1/1. In terms of biological role, succinyl-CoA synthetase functions in the citric acid cycle (TCA), coupling the hydrolysis of succinyl-CoA to the synthesis of either ATP or GTP and thus represents the only step of substrate-level phosphorylation in the TCA. The beta subunit provides nucleotide specificity of the enzyme and binds the substrate succinate, while the binding sites for coenzyme A and phosphate are found in the alpha subunit. The polypeptide is Succinate--CoA ligase [ADP-forming] subunit beta (Bradyrhizobium sp. (strain BTAi1 / ATCC BAA-1182)).